A 212-amino-acid chain; its full sequence is Probable transaldolase (212 aa).

Lys-83 serves as the catalytic Schiff-base intermediate with substrate.

This sequence belongs to the transaldolase family. Type 3B subfamily.

It is found in the cytoplasm. It carries out the reaction D-sedoheptulose 7-phosphate + D-glyceraldehyde 3-phosphate = D-erythrose 4-phosphate + beta-D-fructose 6-phosphate. Its pathway is carbohydrate degradation; pentose phosphate pathway; D-glyceraldehyde 3-phosphate and beta-D-fructose 6-phosphate from D-ribose 5-phosphate and D-xylulose 5-phosphate (non-oxidative stage): step 2/3. Functionally, transaldolase is important for the balance of metabolites in the pentose-phosphate pathway. This Halalkalibacterium halodurans (strain ATCC BAA-125 / DSM 18197 / FERM 7344 / JCM 9153 / C-125) (Bacillus halodurans) protein is Probable transaldolase (tal).